A 240-amino-acid polypeptide reads, in one-letter code: Methylthioribulose-1-phosphate dehydratase (240 aa).

Residue cysteine 100 coordinates substrate. 2 residues coordinate Zn(2+): histidine 117 and histidine 119. The active-site Proton donor/acceptor is the glutamate 146. Histidine 202 lines the Zn(2+) pocket.

It belongs to the aldolase class II family. MtnB subfamily. The cofactor is Zn(2+).

The protein resides in the cytoplasm. It catalyses the reaction 5-(methylsulfanyl)-D-ribulose 1-phosphate = 5-methylsulfanyl-2,3-dioxopentyl phosphate + H2O. It participates in amino-acid biosynthesis; L-methionine biosynthesis via salvage pathway; L-methionine from S-methyl-5-thio-alpha-D-ribose 1-phosphate: step 2/6. In terms of biological role, catalyzes the dehydration of methylthioribulose-1-phosphate (MTRu-1-P) into 2,3-diketo-5-methylthiopentyl-1-phosphate (DK-MTP-1-P). This chain is Methylthioribulose-1-phosphate dehydratase, found in Emericella nidulans (strain FGSC A4 / ATCC 38163 / CBS 112.46 / NRRL 194 / M139) (Aspergillus nidulans).